Here is a 388-residue protein sequence, read N- to C-terminus: Pepsin A-1 (388 aa).

An N-terminal signal peptide occupies residues 1 to 15; sequence MKWLLLLGLVALSEC. 2 consecutive propeptides (activation peptide) follow at residues 16-40 and 41-62; these read IIYKVPLVRKKSLRRNLSEHGLLKD and FLKKHNLNPASKYFPQAEAPTL. A Peptidase A1 domain is found at 76–385; the sequence is YFGTIGIGTP…DRANNQVGLA (310 aa). The active site involves aspartate 94. A disulfide bridge links cysteine 107 with cysteine 112. Position 130 is a phosphoserine (serine 130). A disulfide bridge links cysteine 268 with cysteine 272. Aspartate 277 is a catalytic residue. Cysteine 311 and cysteine 344 form a disulfide bridge.

The protein belongs to the peptidase A1 family. Each pepsinogen is converted to corresponding pepsin at pH 2.0 in part as a result of the release of a 47 AA activation segment and in part as a result of stepwise proteolytic cleavage via an intermediate form(s).

It localises to the secreted. The enzyme catalyses Preferential cleavage: hydrophobic, preferably aromatic, residues in P1 and P1' positions. Cleaves 1-Phe-|-Val-2, 4-Gln-|-His-5, 13-Glu-|-Ala-14, 14-Ala-|-Leu-15, 15-Leu-|-Tyr-16, 16-Tyr-|-Leu-17, 23-Gly-|-Phe-24, 24-Phe-|-Phe-25 and 25-Phe-|-Tyr-26 bonds in the B chain of insulin.. Functionally, shows particularly broad specificity; although bonds involving phenylalanine and leucine are preferred, many others are also cleaved to some extent. The polypeptide is Pepsin A-1 (PGA) (Macaca fuscata fuscata (Japanese macaque)).